Consider the following 105-residue polypeptide: uncharacterized protein (105 aa).

Residues 1 to 27 (MSLKSWHPQSKTKRVGASEGNPQWGSG) form a disordered region.

This is an uncharacterized protein from Homo sapiens (Human).